The chain runs to 901 residues: Alanine--tRNA ligase (901 aa).

His581, His585, Cys684, and His688 together coordinate Zn(2+).

This sequence belongs to the class-II aminoacyl-tRNA synthetase family. It depends on Zn(2+) as a cofactor.

It is found in the cytoplasm. It catalyses the reaction tRNA(Ala) + L-alanine + ATP = L-alanyl-tRNA(Ala) + AMP + diphosphate. Functionally, catalyzes the attachment of alanine to tRNA(Ala) in a two-step reaction: alanine is first activated by ATP to form Ala-AMP and then transferred to the acceptor end of tRNA(Ala). Also edits incorrectly charged Ser-tRNA(Ala) and Gly-tRNA(Ala) via its editing domain. The polypeptide is Alanine--tRNA ligase (Mycobacterium marinum (strain ATCC BAA-535 / M)).